The primary structure comprises 847 residues: A-kinase anchor protein 4 (847 aa).

Positions 1–187 (MIAYCGTTKM…MAASKNTNNN (187 aa)) are excised as a propeptide. Ser-95, Ser-129, Ser-189, and Ser-203 each carry phosphoserine. Residues 182-204 (KNTNNNQSPSNPATKSPSNQRSV) show a composition bias toward polar residues. The interval 182–209 (KNTNNNQSPSNPATKSPSNQRSVATPDG) is disordered. Phosphothreonine is present on Thr-206. 3 positions are modified to phosphoserine: Ser-212, Ser-225, and Ser-270. Positions 218–231 (YYVNRLSSLVIQMA) are interaction with Prkar1a and Prkar2a. Tyr-300 is modified (phosphotyrosine). A phosphoserine mark is found at Ser-301, Ser-304, Ser-340, Ser-430, Ser-441, Ser-443, Ser-462, Ser-491, Ser-496, and Ser-503. A PKA-RI subunit binding domain region spans residues 334 to 343 (YANQVASDMM). The residue at position 505 (Thr-505) is a Phosphothreonine. The tract at residues 511–536 (KQGTQGRVPNKVCPSKDEKREKISPS) is disordered. Residues 524-533 (PSKDEKREKI) are compositionally biased toward basic and acidic residues. A phosphoserine mark is found at Ser-536 and Ser-581. The segment at 583-613 (QYEKSGGGQSSKSLSMKHFESRGAPGPSTCA) is disordered. Residues Ser-626, Ser-631, Ser-648, Ser-650, Ser-674, Ser-677, Ser-700, and Ser-729 each carry the phosphoserine modification. The segment at 655-677 (CCDSRSKQAAPVAKRPEDQSQDS) is disordered.

This sequence belongs to the AKAP110 family. In terms of assembly, interacts with PRKAR1A and PRKAR2A. Interacts with ENO4. Interacts with QRICH2. In terms of processing, phosphorylated by STK33 during sperm flagella assembly. Expressed in flagella of epididymal sperm.

It localises to the cell projection. Its subcellular location is the cilium. The protein localises to the flagellum. Functionally, major structural component of sperm fibrous sheath. May play a role in sperm motility. The protein is A-kinase anchor protein 4 of Rattus norvegicus (Rat).